Consider the following 151-residue polypeptide: Ribosome maturation factor RimP (151 aa).

The protein belongs to the RimP family.

The protein resides in the cytoplasm. In terms of biological role, required for maturation of 30S ribosomal subunits. This is Ribosome maturation factor RimP from Photobacterium profundum (strain SS9).